A 198-amino-acid polypeptide reads, in one-letter code: Recombination protein RecR (198 aa).

A C4-type zinc finger spans residues 57 to 72 (CSVCCNLTDQDPCQIC). Residues 80-175 (STICVVQEPR…KVTRIARGLP (96 aa)) form the Toprim domain.

The protein belongs to the RecR family.

Functionally, may play a role in DNA repair. It seems to be involved in an RecBC-independent recombinational process of DNA repair. It may act with RecF and RecO. The polypeptide is Recombination protein RecR (Symbiobacterium thermophilum (strain DSM 24528 / JCM 14929 / IAM 14863 / T)).